Reading from the N-terminus, the 273-residue chain is Trypsin-6 (273 aa).

An N-terminal signal peptide occupies residues 1–22 (MLSKFTAILLAVHIALFACALT). Residues 23–46 (QAEKRHKLTRPAFHPNAPYLAGKR) constitute a propeptide, activation peptide. The Peptidase S1 domain maps to 47-272 (IVGGFVIDIS…VRDWIRETSG (226 aa)). A disulfide bridge connects residues cysteine 72 and cysteine 88. Residues histidine 87 and aspartate 132 each act as charge relay system in the active site. Cystine bridges form between cysteine 197-cysteine 213 and cysteine 224-cysteine 248. The active-site Charge relay system is serine 228.

It belongs to the peptidase S1 family. As to expression, expressed in the midgut. Expression levels drop a few hours after blood feeding and pick up again 28 hours later.

The protein resides in the secreted. It catalyses the reaction Preferential cleavage: Arg-|-Xaa, Lys-|-Xaa.. Functionally, constitutive trypsin that is expressed 2 days after emergence, coinciding with host seeking behavior of the female. The polypeptide is Trypsin-6 (TRYP6) (Anopheles gambiae (African malaria mosquito)).